Consider the following 138-residue polypeptide: Large ribosomal subunit protein uL14 (138 aa).

This sequence belongs to the universal ribosomal protein uL14 family. Part of the 50S ribosomal subunit. Forms a cluster with proteins L3 and L24e, part of which may contact the 16S rRNA in 2 intersubunit bridges.

Functionally, binds to 23S rRNA. Forms part of two intersubunit bridges in the 70S ribosome. The polypeptide is Large ribosomal subunit protein uL14 (Metallosphaera sedula (strain ATCC 51363 / DSM 5348 / JCM 9185 / NBRC 15509 / TH2)).